We begin with the raw amino-acid sequence, 212 residues long: Peroxisomal membrane protein 4 (212 aa).

Asparagine 57 carries N-linked (GlcNAc...) asparagine glycosylation. A run of 2 helical transmembrane segments spans residues 97 to 117 (GKTYPAHAFLAAFLGGILVFG) and 153 to 173 (WDPFPLLTAVVWGLVLWLFEY). The N-linked (GlcNAc...) asparagine glycan is linked to asparagine 206.

This sequence belongs to the peroxisomal membrane protein PXMP2/4 family. As to quaternary structure, interacts with PEX19. As to expression, expressed in normal prostate epithelial cells, and androgen-sensitive prostate adenocarcinoma cells. Not expressed in androgen-insensitive prostate adenocarcinoma cells.

Its subcellular location is the peroxisome membrane. The protein is Peroxisomal membrane protein 4 (PXMP4) of Homo sapiens (Human).